We begin with the raw amino-acid sequence, 499 residues long: Glucooligosaccharide oxidase (499 aa).

Residues 1–25 (MVRIQELTAALSLASVVQASWIQKR) form the signal peptide. The cysteines at positions 31 and 80 are disulfide-linked. The FAD-binding PCMH-type domain maps to 58–230 (VDYDPAAIAI…SEFEFNTFEA (173 aa)). The 6-(S-cysteinyl)-8alpha-(pros-histidyl)-FAD (His-Cys) cross-link spans 95-155 (HSYGSYGFGG…GNRALSHGTC (61 aa)). Substrate contacts are provided by Y97, T154, and R270. N-linked (GlcNAc...) asparagine glycans are attached at residues N330 and N366. Substrate is bound by residues Q378 and Q409. An N-linked (GlcNAc...) asparagine glycan is attached at N419. Y454 provides a ligand contact to substrate. The active-site Proton acceptor is the Y454.

This sequence belongs to the oxygen-dependent FAD-linked oxidoreductase family. FAD is required as a cofactor. In terms of processing, the FAD cofactor is bound via a bicovalent 6-S-cysteinyl, 8alpha-N1-histidyl FAD linkage.

It is found in the secreted. The enzyme catalyses beta-lactose + O2 = lactobiono-1,5-lactone + H2O2. The catalysed reaction is D-cellobiose + O2 = D-cellobiono-1,5-lactone + H2O2. It catalyses the reaction D-cellotriose + O2 = D-cellotriono-1,5-lactone + H2O2. It carries out the reaction D-cellotetraose + O2 = D-cellotetraono-1,5-lactone + H2O2. The enzyme catalyses D-cellopentaose + O2 = D-cellopentaono-1,5-lactone + H2O2. The catalysed reaction is D-cellohexaose + O2 = D-cellohexaono-1,5-lactone + H2O2. Catalyzes the selective oxidation of C1 hydroxyl moieties on mono- and disaccharides with concomitant reduction of molecular oxygen to hydrogen peroxide. This results in the formation of the corresponding lactones, which typically undergo spontaneous hydrolysis. Glucooligosaccharide oxidase is able to oxidize the monosaccharide D-glucose as well as the disaccharides maltose, cellobiose, and lactose. In addition, it shows high selectivity for cello- and maltooligosaccharides, indicating that glucooligosaccharide oxidase prefers oligosaccharides with a beta-D-glucosyl unit on the reducing end and additional sugar units linked by alpha- or beta-1,4 glucosidic bonds. The protein is Glucooligosaccharide oxidase (gluO) of Sarocladium strictum (Black bundle disease fungus).